A 182-amino-acid polypeptide reads, in one-letter code: MVASTTVPYLPKIFFNLTGSRQLHGIFLIINFGLPFSMESSPSASSSSSLFWPVIFSDDSGVLFSTTSDVFFERSLLLAMSTLKICPLNLVFLALARASFVSSSTAKLTNPKPLDLLFVSLTTTACLIGAKLEKKSASCSSVTSWGIDLTNKVFISRPSSFCFETLLEGTSTFSIVSSISLW.

2 helical membrane passes run 76-96 (LLLAMSTLKICPLNLVFLALA) and 114-130 (LDLLFVSLTTTACLIGA).

The protein localises to the membrane. This is an uncharacterized protein from Saccharomyces cerevisiae (strain ATCC 204508 / S288c) (Baker's yeast).